The chain runs to 199 residues: LIM domain-containing protein WLIM2b (199 aa).

LIM zinc-binding domains lie at 8-68 (QKCK…LFKE) and 106-166 (EKCA…LFKE).

In terms of assembly, interacts with F-actin. Expressed in roots, leaves, stems, flowers and siliques. Barely detected in pollen.

It localises to the cytoplasm. Its subcellular location is the cytoskeleton. Functionally, binds to actin filaments and promotes cross-linking into thick bundles. Has an actin-stabilizing activity. The actin regulatory activities are not regulated by pH and [Ca(2+)]. This chain is LIM domain-containing protein WLIM2b, found in Arabidopsis thaliana (Mouse-ear cress).